Here is a 618-residue protein sequence, read N- to C-terminus: Sodium/iodide cotransporter (618 aa).

Residues 1–14 lie on the Extracellular side of the membrane; sequence MEGAEAGARATFGA. A helical transmembrane segment spans residues 15 to 31; it reads WDYGVFATMLLVSTGIG. The Cytoplasmic segment spans residues 32-56; it reads LWVGLARGGQRSADDFFTGGRQLAA. The chain crosses the membrane as a discontinuously helical span at residues 57-80; sequence VPVGLSLAASFMSAVQVLGVPAEA. Residues S69, V71, and Q72 each contribute to the Na(+) site. V76 contacts iodide. Over 81–84 the chain is Extracellular; it reads ARYG. A helical membrane pass occupies residues 85–105; that stretch reads LKFLWMCAGQLLNSLLTAFLF. M90 contributes to the iodide binding site. The Cytoplasmic portion of the chain corresponds to 106 to 130; sequence LPIFYRLGLTSTYQYLELRFSRAVR. The helical transmembrane segment at 131–157 threads the bilayer; it reads LCGTLQYLVATMLYTGIVIYAPALILN. Y144 contributes to the Na(+) binding site. Over 158–163 the chain is Extracellular; sequence QVTGLD. A helical transmembrane segment spans residues 164-181; the sequence is IWASLLSTGIICTLYTTV. Over 182–189 the chain is Cytoplasmic; the sequence is GGMKAVVW. A helical transmembrane segment spans residues 190–208; that stretch reads TDVFQVVVMLVGFWVILAR. Over 209 to 243 the chain is Extracellular; it reads GVILLGGPRNVLSLAQNHSRINLMDFDPDPRSRYT. Residues 244 to 266 form a discontinuously helical membrane-spanning segment; the sequence is FWTFIVGGTLVWLSMYGVNQAQV. W255 is a binding site for iodide. M258 contacts Na(+). Residues 267 to 278 lie on the Cytoplasmic side of the membrane; sequence QRYVACHTEGKA. The chain crosses the membrane as a helical span at residues 279-301; the sequence is KLALLVNQLGLFLIVASAACCGI. The Extracellular portion of the chain corresponds to 302–335; the sequence is VMFVYYKDCDPLLTGRISAPDQYMPLLVLDIFED. Residues 336–363 form a helical membrane-spanning segment; it reads LPGVPGLFLACAYSGTLSTASTSINAMA. Residues 364–386 lie on the Cytoplasmic side of the membrane; that stretch reads AVTVEDLIKPRMPGLAPRKLVFI. The helical transmembrane segment at 387–408 threads the bilayer; it reads SKGLSFIYGSACLTVAALSSLL. The Extracellular portion of the chain corresponds to 409-411; that stretch reads GGG. The chain crosses the membrane as a helical span at residues 412-437; that stretch reads VLQGSFTVMGVISGPLLGAFTLGMLL. L413 serves as a coordination point for iodide. Na(+)-binding residues include S416 and F417. F417 contacts iodide. At 438–441 the chain is on the cytoplasmic side; sequence PACN. The helical transmembrane segment at 442–465 threads the bilayer; that stretch reads TPGVLSGLAAGLAVSLWVAVGATL. Topologically, residues 466-520 are extracellular; the sequence is YPPGEQTMGVLPTSAAGCTNDSVLLGPPGATNASNGIPSSGMDTGRPALADTFYA. N-linked (GlcNAc...) asparagine glycans are attached at residues N485 and N497. Residues 521-545 form a helical membrane-spanning segment; sequence ISYLYYGALGTLTTMLCGALISYLT. The Cytoplasmic segment spans residues 546-618; it reads GPTKRSSLGP…YLGHDVETNL (73 aa). S551 bears the Phosphoserine; by PKA mark. Positions 587–618 are disordered; sequence EDIPAVTKKPPGLKPGAETHPLYLGHDVETNL.

It belongs to the sodium:solute symporter (SSF) (TC 2.A.21) family. Monomer.

It is found in the cell membrane. The protein localises to the cytoplasm. It catalyses the reaction iodide(out) + 2 Na(+)(out) = iodide(in) + 2 Na(+)(in). The enzyme catalyses chlorate(out) + 2 Na(+)(out) = chlorate(in) + 2 Na(+)(in). It carries out the reaction thiocyanate(out) + 2 Na(+)(out) = thiocyanate(in) + 2 Na(+)(in). The catalysed reaction is nitrate(out) + 2 Na(+)(out) = nitrate(in) + 2 Na(+)(in). It catalyses the reaction selenocyanate(out) + 2 Na(+)(out) = selenocyanate(in) + 2 Na(+)(in). With respect to regulation, perchlorate inhibits iodide transport activity. Oxyanions inhibit iodide transport activity by blocking the binding sites for iodide and one of the sodium ions. Its function is as follows. Sodium:iodide symporter that mediates the transport of iodide into the thyroid gland. Can also mediate the transport of chlorate, thiocynate, nitrate and selenocynate. The chain is Sodium/iodide cotransporter (Slc5a5) from Rattus norvegicus (Rat).